Consider the following 393-residue polypeptide: Probable chromate transport protein (393 aa).

10 helical membrane passes run 22–42 (YFLK…GYMH), 90–110 (ALVG…LGWA), 119–139 (WMQA…AISA), 146–166 (TVGT…TTIV), 201–221 (FIGL…TSLL), 231–251 (AGAF…GGVV), 261–281 (QFLD…ITTG), 282–302 (FIGF…AMFI), 327–347 (FVNG…VVLG), and 370–390 (LGKK…GVIF).

It belongs to the chromate ion transporter (CHR) (TC 2.A.51) family.

It is found in the cell membrane. May function in the active transport of chromate into the cell under sulfur-deficient conditions. The polypeptide is Probable chromate transport protein (srpC) (Synechococcus elongatus (strain ATCC 33912 / PCC 7942 / FACHB-805) (Anacystis nidulans R2)).